A 327-amino-acid chain; its full sequence is (-)-delta-cadinene synthase (327 aa).

5 residues coordinate Mg(2+): D84, D85, N222, T226, and E230.

It belongs to the terpene synthase family.

It catalyses the reaction (2E,6E)-farnesyl diphosphate = (-)-delta-cadinene + diphosphate. Its function is as follows. Catalyzes the conversion of (2E,6E)-farnesyl diphosphate into (-)-delta-cadinene. Cyclization mechanism involves an intermediate nerolidyl diphosphate leading to a helminthogermacradienyl cation. This is (-)-delta-cadinene synthase from Streptomyces clavuligerus.